The following is a 600-amino-acid chain: Proline--tRNA ligase (600 aa).

It belongs to the class-II aminoacyl-tRNA synthetase family. ProS type 1 subfamily. Homodimer.

The protein resides in the cytoplasm. It carries out the reaction tRNA(Pro) + L-proline + ATP = L-prolyl-tRNA(Pro) + AMP + diphosphate. Its function is as follows. Catalyzes the attachment of proline to tRNA(Pro) in a two-step reaction: proline is first activated by ATP to form Pro-AMP and then transferred to the acceptor end of tRNA(Pro). As ProRS can inadvertently accommodate and process non-cognate amino acids such as alanine and cysteine, to avoid such errors it has two additional distinct editing activities against alanine. One activity is designated as 'pretransfer' editing and involves the tRNA(Pro)-independent hydrolysis of activated Ala-AMP. The other activity is designated 'posttransfer' editing and involves deacylation of mischarged Ala-tRNA(Pro). The misacylated Cys-tRNA(Pro) is not edited by ProRS. The chain is Proline--tRNA ligase from Synechococcus sp. (strain RCC307).